Reading from the N-terminus, the 147-residue chain is Ubiquitin-conjugating enzyme E2 4 (147 aa).

The region spanning 1–147 (MSLKRINKEL…AKEWTKKYAV (147 aa)) is the UBC core domain. Residue cysteine 85 is the Glycyl thioester intermediate of the active site.

Belongs to the ubiquitin-conjugating enzyme family.

It catalyses the reaction S-ubiquitinyl-[E1 ubiquitin-activating enzyme]-L-cysteine + [E2 ubiquitin-conjugating enzyme]-L-cysteine = [E1 ubiquitin-activating enzyme]-L-cysteine + S-ubiquitinyl-[E2 ubiquitin-conjugating enzyme]-L-cysteine.. The protein operates within protein modification; protein ubiquitination. In terms of biological role, E2 ubiquitin-conjugating enzyme that catalyzes the covalent attachment of ubiquitin to other proteins. Mediates the selective degradation of short-lived and abnormal proteins. Mediates ubiquitination of PEX5. This is Ubiquitin-conjugating enzyme E2 4 (UBC4) from Candida albicans (Yeast).